The following is a 307-amino-acid chain: Ribosomal RNA small subunit methyltransferase H (307 aa).

S-adenosyl-L-methionine is bound by residues G32–H34, D52, F78, D100, and Q107.

It belongs to the methyltransferase superfamily. RsmH family.

The protein localises to the cytoplasm. It catalyses the reaction cytidine(1402) in 16S rRNA + S-adenosyl-L-methionine = N(4)-methylcytidine(1402) in 16S rRNA + S-adenosyl-L-homocysteine + H(+). Its function is as follows. Specifically methylates the N4 position of cytidine in position 1402 (C1402) of 16S rRNA. In Coxiella burnetii (strain CbuK_Q154) (Coxiella burnetii (strain Q154)), this protein is Ribosomal RNA small subunit methyltransferase H.